The primary structure comprises 149 residues: Large ribosomal subunit protein uL13 (149 aa).

Belongs to the universal ribosomal protein uL13 family. In terms of assembly, part of the 50S ribosomal subunit.

This protein is one of the early assembly proteins of the 50S ribosomal subunit, although it is not seen to bind rRNA by itself. It is important during the early stages of 50S assembly. In Bifidobacterium longum subsp. infantis (strain ATCC 15697 / DSM 20088 / JCM 1222 / NCTC 11817 / S12), this protein is Large ribosomal subunit protein uL13.